The primary structure comprises 263 residues: MFEAKLANAGLLKKIVESIKDLVTDAPFDCSETAMSLQAMDSSHVALVSLKLEVGLFDTYRCDRTINLGLSLANMSKALKCANNDDTCMLKYEENEGDSIIFTFADPKRDKTQDVTVKMMDIDSEHLGIPDQDYAVVCEMPAGEFQKTCKDLSTFSDSLNITATKAGIVFTGKGDIGSSVVTYSPSSNTDDETEAVTLEVKDPVNVNFSIKYMNQFTKATALSDRVRLSLCNDVPVVVEYPIEENGYLRFYLAPKIDDDENMD.

A DNA-binding region spans residues 61 to 80 (RCDRTINLGLSLANMSKALK).

It belongs to the PCNA family. Homotrimer. Forms a complex with activator 1 heteropentamer in the presence of ATP.

Its subcellular location is the nucleus. This protein is an auxiliary protein of DNA polymerase delta and is involved in the control of eukaryotic DNA replication by increasing the polymerase's processibility during elongation of the leading strand. This is Proliferating cell nuclear antigen (pcn-1) from Caenorhabditis elegans.